The chain runs to 178 residues: Probable chorismate pyruvate-lyase (178 aa).

The substrate site is built by arginine 72, leucine 110, and glutamate 169.

This sequence belongs to the UbiC family.

The protein resides in the cytoplasm. It carries out the reaction chorismate = 4-hydroxybenzoate + pyruvate. It participates in cofactor biosynthesis; ubiquinone biosynthesis. In terms of biological role, removes the pyruvyl group from chorismate, with concomitant aromatization of the ring, to provide 4-hydroxybenzoate (4HB) for the ubiquinone pathway. This chain is Probable chorismate pyruvate-lyase, found in Nitrosomonas europaea (strain ATCC 19718 / CIP 103999 / KCTC 2705 / NBRC 14298).